A 382-amino-acid chain; its full sequence is Histidinol-phosphate aminotransferase (382 aa).

Residue K215 is modified to N6-(pyridoxal phosphate)lysine. Residues 363 to 382 (NIDNQNKTYSQTSSIRKGTI) form a disordered region.

Belongs to the class-II pyridoxal-phosphate-dependent aminotransferase family. Histidinol-phosphate aminotransferase subfamily. In terms of assembly, homodimer. The cofactor is pyridoxal 5'-phosphate.

The catalysed reaction is L-histidinol phosphate + 2-oxoglutarate = 3-(imidazol-4-yl)-2-oxopropyl phosphate + L-glutamate. It functions in the pathway amino-acid biosynthesis; L-histidine biosynthesis; L-histidine from 5-phospho-alpha-D-ribose 1-diphosphate: step 7/9. The sequence is that of Histidinol-phosphate aminotransferase from Yersinia pestis bv. Antiqua (strain Antiqua).